The sequence spans 133 residues: ATP synthase epsilon chain, chloroplastic (133 aa).

Belongs to the ATPase epsilon chain family. In terms of assembly, F-type ATPases have 2 components, CF(1) - the catalytic core - and CF(0) - the membrane proton channel. CF(1) has five subunits: alpha(3), beta(3), gamma(1), delta(1), epsilon(1). CF(0) has three main subunits: a, b and c.

It is found in the plastid. The protein resides in the chloroplast thylakoid membrane. Its function is as follows. Produces ATP from ADP in the presence of a proton gradient across the membrane. The polypeptide is ATP synthase epsilon chain, chloroplastic (Morus indica (Mulberry)).